We begin with the raw amino-acid sequence, 213 residues long: TVP38/TMEM64 family membrane protein YtxB (213 aa).

Helical transmembrane passes span 9–29, 34–54, 58–78, 81–101, 159–179, and 181–201; these read WLAVLAGAGLLYWGNKTYLNV, IRVWVLSFGVFAPLMFIGISI, LVLFPVSVISIAGGLAFGPLL, LYTLFGSMCASAVSFFAAGLF, AVGIIPGTIALNVLGASFLAG, and LPAFFMVLALYIVFISLPFIF.

This sequence belongs to the TVP38/TMEM64 family.

The protein localises to the cell membrane. This is TVP38/TMEM64 family membrane protein YtxB (ytxB) from Bacillus subtilis (strain 168).